We begin with the raw amino-acid sequence, 114 residues long: Large ribosomal subunit protein uL22 (114 aa).

Belongs to the universal ribosomal protein uL22 family. As to quaternary structure, part of the 50S ribosomal subunit.

In terms of biological role, this protein binds specifically to 23S rRNA; its binding is stimulated by other ribosomal proteins, e.g. L4, L17, and L20. It is important during the early stages of 50S assembly. It makes multiple contacts with different domains of the 23S rRNA in the assembled 50S subunit and ribosome. Functionally, the globular domain of the protein is located near the polypeptide exit tunnel on the outside of the subunit, while an extended beta-hairpin is found that lines the wall of the exit tunnel in the center of the 70S ribosome. The polypeptide is Large ribosomal subunit protein uL22 (Desulfitobacterium hafniense (strain DSM 10664 / DCB-2)).